The following is a 505-amino-acid chain: 2,3-bisphosphoglycerate-independent phosphoglycerate mutase (505 aa).

2 residues coordinate Mn(2+): Asp11 and Ser61. Catalysis depends on Ser61, which acts as the Phosphoserine intermediate. Substrate-binding positions include His122, 152 to 153 (RD), Arg183, Arg189, 259 to 262 (RTDR), and Lys332. Mn(2+)-binding residues include Asp399, His403, Asp440, His441, and His458.

This sequence belongs to the BPG-independent phosphoglycerate mutase family. Monomer. The cofactor is Mn(2+).

It carries out the reaction (2R)-2-phosphoglycerate = (2R)-3-phosphoglycerate. Its pathway is carbohydrate degradation; glycolysis; pyruvate from D-glyceraldehyde 3-phosphate: step 3/5. In terms of biological role, catalyzes the interconversion of 2-phosphoglycerate and 3-phosphoglycerate. This is 2,3-bisphosphoglycerate-independent phosphoglycerate mutase from Flavobacterium psychrophilum (strain ATCC 49511 / DSM 21280 / CIP 103535 / JIP02/86).